Here is a 189-residue protein sequence, read N- to C-terminus: dTTP/UTP pyrophosphatase (189 aa).

D64 functions as the Proton acceptor in the catalytic mechanism.

This sequence belongs to the Maf family. YhdE subfamily. It depends on a divalent metal cation as a cofactor.

Its subcellular location is the cytoplasm. It carries out the reaction dTTP + H2O = dTMP + diphosphate + H(+). It catalyses the reaction UTP + H2O = UMP + diphosphate + H(+). Functionally, nucleoside triphosphate pyrophosphatase that hydrolyzes dTTP and UTP. May have a dual role in cell division arrest and in preventing the incorporation of modified nucleotides into cellular nucleic acids. The polypeptide is dTTP/UTP pyrophosphatase (Syntrophomonas wolfei subsp. wolfei (strain DSM 2245B / Goettingen)).